The chain runs to 185 residues: Threonylcarbamoyl-AMP synthase (185 aa).

The region spanning 3 to 185 (EQAPDEVQEI…VDAISGKVLR (183 aa)) is the YrdC-like domain.

Belongs to the SUA5 family. TsaC subfamily.

The protein localises to the cytoplasm. It catalyses the reaction L-threonine + hydrogencarbonate + ATP = L-threonylcarbamoyladenylate + diphosphate + H2O. Its function is as follows. Required for the formation of a threonylcarbamoyl group on adenosine at position 37 (t(6)A37) in tRNAs that read codons beginning with adenine. Catalyzes the conversion of L-threonine, HCO(3)(-)/CO(2) and ATP to give threonylcarbamoyl-AMP (TC-AMP) as the acyladenylate intermediate, with the release of diphosphate. This Shewanella sediminis (strain HAW-EB3) protein is Threonylcarbamoyl-AMP synthase.